The following is a 275-amino-acid chain: NH(3)-dependent NAD(+) synthetase (275 aa).

ATP is bound at residue 39–46 (GLSGGVDS). D45 lines the Mg(2+) pocket. R124 contributes to the deamido-NAD(+) binding site. T144 contacts ATP. Mg(2+) is bound at residue E149. The deamido-NAD(+) site is built by K157 and D164. ATP is bound by residues K173 and S195. 255–256 (HK) lines the deamido-NAD(+) pocket.

It belongs to the NAD synthetase family. Homodimer.

The catalysed reaction is deamido-NAD(+) + NH4(+) + ATP = AMP + diphosphate + NAD(+) + H(+). Its pathway is cofactor biosynthesis; NAD(+) biosynthesis; NAD(+) from deamido-NAD(+) (ammonia route): step 1/1. Functionally, catalyzes the ATP-dependent amidation of deamido-NAD to form NAD. Uses ammonia as a nitrogen source. The polypeptide is NH(3)-dependent NAD(+) synthetase (Staphylothermus marinus (strain ATCC 43588 / DSM 3639 / JCM 9404 / F1)).